The following is a 236-amino-acid chain: Orotidine 5'-phosphate decarboxylase (236 aa).

Residues Asp16, Lys38, 65 to 74 (DLKLHDIGNT), Thr123, Arg184, Gln193, Gly213, and Arg214 each bind substrate. The active-site Proton donor is the Lys67.

The protein belongs to the OMP decarboxylase family. Type 1 subfamily. In terms of assembly, homodimer.

It catalyses the reaction orotidine 5'-phosphate + H(+) = UMP + CO2. It functions in the pathway pyrimidine metabolism; UMP biosynthesis via de novo pathway; UMP from orotate: step 2/2. Catalyzes the decarboxylation of orotidine 5'-monophosphate (OMP) to uridine 5'-monophosphate (UMP). In Methylobacterium nodulans (strain LMG 21967 / CNCM I-2342 / ORS 2060), this protein is Orotidine 5'-phosphate decarboxylase.